A 72-amino-acid polypeptide reads, in one-letter code: High-potential iron-sulfur protein isozyme 1 (72 aa).

Alanine 1 is subject to N-carbamoylalanine; partial. Residues cysteine 34, cysteine 37, cysteine 51, and cysteine 65 each coordinate [4Fe-4S] cluster.

This sequence belongs to the high-potential iron-sulfur protein (HiPIP) family. In terms of assembly, homodimer.

Specific class of high-redox-potential 4Fe-4S ferredoxins. Functions in anaerobic electron transport in most purple and in some other photosynthetic bacteria and in at least one genus (Paracoccus) of halophilic, denitrifying bacteria. The polypeptide is High-potential iron-sulfur protein isozyme 1 (Ectothiorhodospira mobilis).